A 1665-amino-acid chain; its full sequence is Cortactin-binding protein 2 (1665 aa).

Disordered regions lie at residues 1-23 (MATD…AGAT), 201-235 (EEKK…SEFD), 360-441 (ASHG…LHPG), 455-480 (GNAN…PTSR), and 499-617 (RFTS…PKPS). Residues 120–276 (KMQERMSTQL…EQLKRGNDNK (157 aa)) adopt a coiled-coil conformation. Residues 385 to 395 (GPSTGSTADLT) show a composition bias toward polar residues. Arg-499 bears the Asymmetric dimethylarginine mark. Over residues 584–594 (TVASPPSSLPQ) the composition is skewed to polar residues. ANK repeat units follow at residues 710–740 (GRPT…DINY), 744–773 (DGHS…QVDA), 777–806 (NGFT…NINH), 810–839 (GGQT…DRSI), 843–872 (DGWT…PAHG), and 914–944 (EGWT…EPER). Residues 1447–1484 (CSKKKGESGAWRKVSTSPRKKSSRFSSPTWNKPDLSEE) form a disordered region. Ser-1526 is subject to Phosphoserine. Residues 1544–1562 (SESDISKIADSRDDLRRFD) are compositionally biased toward basic and acidic residues. The tract at residues 1544–1648 (SESDISKIAD…RQIEINNNSK (105 aa)) is disordered. 2 stretches are compositionally biased toward polar residues: residues 1564 to 1576 (PGNN…TVNN) and 1584 to 1604 (KEVS…QSKT). Positions 1626–1640 (SQNTKRSSSSSNTRQ) are enriched in low complexity.

Interacts with CTTN/cortactin SH3 domain. Interacts with STRN, STRN4/zinedin and MOB4/phocein; this interactions mediate the association with the STRIPAK core complex and may regulate dendritic spine distribution of the STRIPAK complex in hippocampal neurons. Activation of glutamate receptors weakens the interaction with STRN and STRN4.

Its subcellular location is the cytoplasm. The protein resides in the cell cortex. It is found in the cell projection. The protein localises to the dendritic spine. In terms of biological role, regulates the dendritic spine distribution of CTTN/cortactin in hippocampal neurons, and thus controls dendritic spinogenesis and dendritic spine maintenance. Associates with the striatin-interacting phosphatase and kinase (STRIPAK) core complex to regulate dendritic spine distribution of the STRIPAK complex in hippocampal neurons. This Equus caballus (Horse) protein is Cortactin-binding protein 2 (CTTNBP2).